A 52-amino-acid polypeptide reads, in one-letter code: Large ribosomal subunit protein eL39 (52 aa).

Belongs to the eukaryotic ribosomal protein eL39 family.

This is Large ribosomal subunit protein eL39 (RPL39) from Tetrahymena thermophila (strain SB210).